Consider the following 279-residue polypeptide: HTH-type transcriptional regulator HdfR (279 aa).

The HTH lysR-type domain maps to methionine 1–threonine 58. The H-T-H motif DNA-binding region spans phenylalanine 18–arginine 37.

This sequence belongs to the LysR transcriptional regulatory family.

Negatively regulates the transcription of the flagellar master operon flhDC by binding to the upstream region of the operon. The sequence is that of HTH-type transcriptional regulator HdfR from Escherichia coli O17:K52:H18 (strain UMN026 / ExPEC).